A 515-amino-acid polypeptide reads, in one-letter code: Cell division control protein 6 homolog (515 aa).

The segment covering 1 to 24 (MPTLRSATASASTAGTASPTAIAT) has biased composition (low complexity). A disordered region spans residues 1–70 (MPTLRSATAS…TPKLLSASPR (70 aa)). Residues 43 to 52 (DASQFTSPHK) are compositionally biased toward polar residues.

Belongs to the CDC6/cdc18 family.

It localises to the nucleus. Functionally, may be involved in the initiation of DNA replication. In Oryza sativa subsp. japonica (Rice), this protein is Cell division control protein 6 homolog.